A 364-amino-acid chain; its full sequence is Probable dual-specificity RNA methyltransferase RlmN (364 aa).

Glu107 acts as the Proton acceptor in catalysis. In terms of domain architecture, Radical SAM core spans 113 to 346; sequence HEYGNSVCVT…ATIRREQGSD (234 aa). Cys120 and Cys351 are joined by a disulfide. 3 residues coordinate [4Fe-4S] cluster: Cys127, Cys131, and Cys134. S-adenosyl-L-methionine-binding positions include 177 to 178, Ser209, 232 to 234, and Asn308; these read GE and SLH. Residue Cys351 is the S-methylcysteine intermediate of the active site.

This sequence belongs to the radical SAM superfamily. RlmN family. The cofactor is [4Fe-4S] cluster.

It localises to the cytoplasm. It carries out the reaction adenosine(2503) in 23S rRNA + 2 reduced [2Fe-2S]-[ferredoxin] + 2 S-adenosyl-L-methionine = 2-methyladenosine(2503) in 23S rRNA + 5'-deoxyadenosine + L-methionine + 2 oxidized [2Fe-2S]-[ferredoxin] + S-adenosyl-L-homocysteine. The catalysed reaction is adenosine(37) in tRNA + 2 reduced [2Fe-2S]-[ferredoxin] + 2 S-adenosyl-L-methionine = 2-methyladenosine(37) in tRNA + 5'-deoxyadenosine + L-methionine + 2 oxidized [2Fe-2S]-[ferredoxin] + S-adenosyl-L-homocysteine. Specifically methylates position 2 of adenine 2503 in 23S rRNA and position 2 of adenine 37 in tRNAs. Confers resistance to some classes of antibiotics. The sequence is that of Probable dual-specificity RNA methyltransferase RlmN from Staphylococcus carnosus (strain TM300).